Reading from the N-terminus, the 269-residue chain is MPELPEVETSRRGISPYLVDHTILYAEVRNTRLRWPVSGEILSLSDEPVLSVRRRAKYLLIELTRGWIIVHLGMSGSLRVLPEYSEPEKHDHVDLVMDSGKVLRYTDPRRFGAWLWTDNPETCSVLAHLGPEPLEAEFSADYLYQASRGKKTAIKQWIMDNKVVVGVGNIYASESLFAAGIHPDRAAGSLNENDAAVLVSVIKQVLQLSIEQGGTTLRDFLQSDGKPGYFAQELRVYGRNGEPCRTCGTPIETAKHGQRSTFFCRRCQK.

Proline 2 functions as the Schiff-base intermediate with DNA in the catalytic mechanism. Glutamate 3 functions as the Proton donor in the catalytic mechanism. Residue lysine 57 is the Proton donor; for beta-elimination activity of the active site. DNA is bound by residues histidine 90, arginine 109, and lysine 150. The segment at 235-269 (RVYGRNGEPCRTCGTPIETAKHGQRSTFFCRRCQK) adopts an FPG-type zinc-finger fold. Residue arginine 259 is the Proton donor; for delta-elimination activity of the active site.

Belongs to the FPG family. As to quaternary structure, monomer. It depends on Zn(2+) as a cofactor.

It carries out the reaction Hydrolysis of DNA containing ring-opened 7-methylguanine residues, releasing 2,6-diamino-4-hydroxy-5-(N-methyl)formamidopyrimidine.. The enzyme catalyses 2'-deoxyribonucleotide-(2'-deoxyribose 5'-phosphate)-2'-deoxyribonucleotide-DNA = a 3'-end 2'-deoxyribonucleotide-(2,3-dehydro-2,3-deoxyribose 5'-phosphate)-DNA + a 5'-end 5'-phospho-2'-deoxyribonucleoside-DNA + H(+). In terms of biological role, involved in base excision repair of DNA damaged by oxidation or by mutagenic agents. Acts as a DNA glycosylase that recognizes and removes damaged bases. Has a preference for oxidized purines, such as 7,8-dihydro-8-oxoguanine (8-oxoG). Has AP (apurinic/apyrimidinic) lyase activity and introduces nicks in the DNA strand. Cleaves the DNA backbone by beta-delta elimination to generate a single-strand break at the site of the removed base with both 3'- and 5'-phosphates. In Pectobacterium carotovorum subsp. carotovorum (strain PC1), this protein is Formamidopyrimidine-DNA glycosylase.